We begin with the raw amino-acid sequence, 151 residues long: Methylglyoxal synthase (151 aa).

Positions 6–151 (RVMPAHKHIA…DYDAYLAERV (146 aa)) constitute an MGS-like domain. Substrate contacts are provided by residues His19, Lys23, 45-48 (TGTT), and 65-66 (SG). The active-site Proton donor/acceptor is Asp71. Position 98 (His98) interacts with substrate.

This sequence belongs to the methylglyoxal synthase family.

It catalyses the reaction dihydroxyacetone phosphate = methylglyoxal + phosphate. In terms of biological role, catalyzes the formation of methylglyoxal from dihydroxyacetone phosphate. This chain is Methylglyoxal synthase, found in Aliivibrio fischeri (strain ATCC 700601 / ES114) (Vibrio fischeri).